The primary structure comprises 344 residues: uncharacterized protein (344 aa).

The N-terminal stretch at 1 to 27 (MKKWLIIAVSLAIAIVLFMYTKGEAKA) is a signal peptide. Residues 29-344 (GMTVGYTTGD…FWKAIRKGTK (316 aa)) enclose the GH18 domain. Glu-140 functions as the Proton donor in the catalytic mechanism.

This sequence belongs to the glycosyl hydrolase 18 family.

This is an uncharacterized protein from Bacillus subtilis (strain 168).